A 425-amino-acid polypeptide reads, in one-letter code: 26S proteasome regulatory subunit 7 (425 aa).

208–215 (GPPGTGKT) contributes to the ATP binding site.

This sequence belongs to the AAA ATPase family.

It localises to the cytoplasm. The protein localises to the nucleus. In terms of biological role, the 26S proteasome is involved in the ATP-dependent degradation of ubiquitinated proteins. The regulatory (or ATPase) complex confers ATP dependency and substrate specificity to the 26S complex. This chain is 26S proteasome regulatory subunit 7 (RPT1), found in Prunus persica (Peach).